The primary structure comprises 981 residues: Proline-rich transmembrane protein 3 (981 aa).

The N-terminal stretch at 1 to 27 is a signal peptide; it reads MASSPWGCVCGLLLLLLPLLGTGPALG. The Extracellular portion of the chain corresponds to 28–474; that stretch reads RGFPRPLENS…RVLSFSWELH (447 aa). Disordered stretches follow at residues 43–107 and 169–457; these read PGAH…GAQR and PPSL…TAPP. The span at 65–85 shows a compositional bias: basic and acidic residues; it reads PRADSHRNSDVRHAPAEEMPE. The tract at residues 297-302 is O-glycosylated at one site; sequence SWEVSS. O-linked (GalNAc...) serine glycosylation is present at S329. Residues 331–340 are compositionally biased toward basic and acidic residues; sequence APDRPSKPER. A glycan (O-linked (GalNAc...) threonine) is linked at T363. N379 is a glycosylation site (N-linked (GlcNAc...) asparagine). The span at 411 to 427 shows a compositional bias: polar residues; the sequence is APSTSRRGLIRVTTQRA. Positions 437 to 457 are enriched in low complexity; that stretch reads TASSMASAPASSPPANATAPP. A helical transmembrane segment spans residues 475 to 495; sequence VYGVGVLFLLPALLALAALAA. The Cytoplasmic segment spans residues 496 to 501; the sequence is APAGPR. Residues 502–522 traverse the membrane as a helical segment; it reads LALVAAVLVLVASALRSAYML. Over 523–542 the chain is Extracellular; the sequence is TDPYGSQARLGVRGGLVLYN. The chain crosses the membrane as a helical span at residues 543–563; that stretch reads LPFPLLLTALAALTLLGLGAG. The Cytoplasmic portion of the chain corresponds to 564-570; sequence LPPPLQN. The chain crosses the membrane as a helical span at residues 571–591; the sequence is PLLLGAVALVHGVGLLATDLL. The Extracellular portion of the chain corresponds to 592 to 598; the sequence is STWSVLN. The helical transmembrane segment at 599–619 threads the bilayer; that stretch reads LLTQGLSCAWGAAVALGTLCL. Residues 620 to 638 lie on the Cytoplasmic side of the membrane; sequence CRRRLLDGPRGWDASPGPR. The helical transmembrane segment at 639–659 threads the bilayer; that stretch reads LLAVAGALGLLASGLQLAAAL. At 660-679 the chain is on the extracellular side; sequence WLYPGPGRVGRFSWAWWGVH. A helical transmembrane segment spans residues 680 to 700; sequence FWLRLLELTWALALALAAVAA. Topologically, residues 701 to 981 are cytoplasmic; that stretch reads ARPRPPTEHA…RSASSDTIEL (281 aa). Positions 759 to 807 are disordered; it reads AESGQLATPSSGAWGSAASLGRGPQGGPGLSRNGVGPAPSLSELDLRPP. Positions 765-780 are enriched in low complexity; that stretch reads ATPSSGAWGSAASLGR. The residue at position 777 (S777) is a Phosphoserine. Residue R780 is modified to Omega-N-methylarginine. Phosphoserine occurs at positions 789, 798, 808, 815, 854, 874, 902, 903, and 911. The interval 836–865 is disordered; it reads LRGLASPPPGGALRPRRGSHPKAELDDAGS. The interval 937 to 981 is disordered; sequence TVQLLPAPTPAPDSTAARQGDGQGEVQPRGKPGESRSASSDTIEL. A compositionally biased stretch (polar residues) spans 972-981; that stretch reads RSASSDTIEL.

Its subcellular location is the membrane. The chain is Proline-rich transmembrane protein 3 (PRRT3) from Homo sapiens (Human).